The sequence spans 208 residues: MAIHVKGQLPNAHFHKDWQRYVKTWFNQPGRKLRRRQARQTKAAKIAPRPVEAIRPAVKPPTIRYNMKVRAGRGFTLEELKAAGVSRRVASTIGIPVDHRRRNRSEESLQRNVERIKVYLAHLIVFPRKAGQPKKGDATDVSGAEQTDVAAVLPITQEAVEEAKPITEEAKNFNAFSTLSNERAYARYAGARAAFQKKRAEEAEAKKK.

2 positions are modified to phosphoserine: Ser-177 and Ser-180.

It belongs to the eukaryotic ribosomal protein eL13 family. As to quaternary structure, component of the large ribosomal subunit (LSU). Mature yeast ribosomes consist of a small (40S) and a large (60S) subunit. The 40S small subunit contains 1 molecule of ribosomal RNA (18S rRNA) and at least 33 different proteins. The large 60S subunit contains 3 rRNA molecules (25S, 5.8S and 5S rRNA) and at least 46 different proteins.

The protein localises to the cytoplasm. Functionally, component of the ribosome, a large ribonucleoprotein complex responsible for the synthesis of proteins in the cell. The small ribosomal subunit (SSU) binds messenger RNAs (mRNAs) and translates the encoded message by selecting cognate aminoacyl-transfer RNA (tRNA) molecules. The large subunit (LSU) contains the ribosomal catalytic site termed the peptidyl transferase center (PTC), which catalyzes the formation of peptide bonds, thereby polymerizing the amino acids delivered by tRNAs into a polypeptide chain. The nascent polypeptides leave the ribosome through a tunnel in the LSU and interact with protein factors that function in enzymatic processing, targeting, and the membrane insertion of nascent chains at the exit of the ribosomal tunnel. The protein is Large ribosomal subunit protein eL13 (rpl13) of Schizosaccharomyces pombe (strain 972 / ATCC 24843) (Fission yeast).